The following is a 337-amino-acid chain: Serpentine receptor class alpha-17 (337 aa).

6 consecutive transmembrane segments (helical) span residues 28 to 48 (LNFVFIATVIFLSFYFAGLAI), 110 to 130 (ELYFYYLTNYFSTYAVFSLTF), 155 to 175 (IIQLLLSLSTYYVGLYGVPLV), 197 to 217 (FRTATMVFCIIVTIFIYYLSV), 247 to 267 (CILIVLQFACIMLSSFGVNYI), and 282 to 302 (IAPFFPGVTYASLCLPLVIYF).

This sequence belongs to the nematode receptor-like protein sra family.

The protein resides in the membrane. The sequence is that of Serpentine receptor class alpha-17 (sra-17) from Caenorhabditis elegans.